The following is a 474-amino-acid chain: tRNA-2-methylthio-N(6)-dimethylallyladenosine synthase (474 aa).

Residues Lys3–Ile120 form the MTTase N-terminal domain. Residues Cys12, Cys49, Cys83, Cys157, Cys161, and Cys164 each coordinate [4Fe-4S] cluster. The Radical SAM core domain occupies Arg143–Arg382. Positions Val381–Arg444 constitute a TRAM domain.

The protein belongs to the methylthiotransferase family. MiaB subfamily. Monomer. It depends on [4Fe-4S] cluster as a cofactor.

It localises to the cytoplasm. The catalysed reaction is N(6)-dimethylallyladenosine(37) in tRNA + (sulfur carrier)-SH + AH2 + 2 S-adenosyl-L-methionine = 2-methylsulfanyl-N(6)-dimethylallyladenosine(37) in tRNA + (sulfur carrier)-H + 5'-deoxyadenosine + L-methionine + A + S-adenosyl-L-homocysteine + 2 H(+). Its function is as follows. Catalyzes the methylthiolation of N6-(dimethylallyl)adenosine (i(6)A), leading to the formation of 2-methylthio-N6-(dimethylallyl)adenosine (ms(2)i(6)A) at position 37 in tRNAs that read codons beginning with uridine. This is tRNA-2-methylthio-N(6)-dimethylallyladenosine synthase from Nitrosospira multiformis (strain ATCC 25196 / NCIMB 11849 / C 71).